Consider the following 288-residue polypeptide: MALFSKKDKYIRITPNNSLKSSVSRNVPEVPDELFAKCPACKHMIYQKDLGPAKICPTCSYNFRISAQERLALTVDEGSFQELFTDIETKDPLRFPDYQAKLQKARQATGLHEAVLTGTALVKGQRLALAIMDSHFIMASMGTVVGEKITRLFELAINERLPVVIFTASGGARMQEGIMSLMQMAKVSAAVKRHSNAGLFYLTILTDPTTGGVTASFAMEGDMIIAEPQSLVGFAGRRVIETTVRENLPDDFQKVEFLKEHGFVDAIVKRTDLRDKIAHLVAFHGGVS.

The CoA carboxyltransferase N-terminal domain occupies 34–288 (LFAKCPACKH…HLVAFHGGVS (255 aa)). Residues Cys38, Cys41, Cys56, and Cys59 each contribute to the Zn(2+) site. The C4-type zinc finger occupies 38 to 59 (CPACKHMIYQKDLGPAKICPTC).

The protein belongs to the AccD/PCCB family. As to quaternary structure, acetyl-CoA carboxylase is a heterohexamer composed of biotin carboxyl carrier protein (AccB), biotin carboxylase (AccC) and two subunits each of ACCase subunit alpha (AccA) and ACCase subunit beta (AccD). Zn(2+) serves as cofactor.

The protein localises to the cytoplasm. The enzyme catalyses N(6)-carboxybiotinyl-L-lysyl-[protein] + acetyl-CoA = N(6)-biotinyl-L-lysyl-[protein] + malonyl-CoA. It functions in the pathway lipid metabolism; malonyl-CoA biosynthesis; malonyl-CoA from acetyl-CoA: step 1/1. Component of the acetyl coenzyme A carboxylase (ACC) complex. Biotin carboxylase (BC) catalyzes the carboxylation of biotin on its carrier protein (BCCP) and then the CO(2) group is transferred by the transcarboxylase to acetyl-CoA to form malonyl-CoA. This Streptococcus equi subsp. zooepidemicus (strain H70) protein is Acetyl-coenzyme A carboxylase carboxyl transferase subunit beta.